A 322-amino-acid chain; its full sequence is Sideroflexin-1 (322 aa).

Ser2 bears the N-acetylserine mark. The Mitochondrial matrix segment spans residues 2–102; sequence SGEVPPNINI…MSAQVPMNMT (101 aa). The helical transmembrane segment at 103–120 threads the bilayer; that stretch reads ITGCMMTFYRTTPAVLFW. The Mitochondrial intermembrane portion of the chain corresponds to 121-146; the sequence is QWINQSFNAVVNYTNRSGDAPLTVNE. Residues 147–167 traverse the membrane as a helical segment; it reads LGTAYVSATTGAVATALGLNA. Topologically, residues 168 to 174 are mitochondrial matrix; the sequence is LTKHVSP. The chain crosses the membrane as a helical span at residues 175 to 195; that stretch reads LIGRFVPFAAVAAANCINIPL. At 196-228 the chain is on the mitochondrial intermembrane side; it reads MRQRELKVGIPVTDENGTRLGESTNAAKQAITQ. Residues 229–249 form a helical membrane-spanning segment; it reads VVISRILMAAPGMAIPPFIMN. Residues 250-266 lie on the Mitochondrial matrix side of the membrane; sequence TLEKKAFLKRFPWMSAP. Residues 267-287 form a helical membrane-spanning segment; that stretch reads IQVTLVGFCLVFATPLCCALF. Residues 288–322 lie on the Mitochondrial intermembrane side of the membrane; it reads PQKSSMSVTSLEDDLQASIQKSHPELRRVYFNKGL.

Belongs to the sideroflexin family.

The protein localises to the mitochondrion inner membrane. The catalysed reaction is L-serine(in) = L-serine(out). It catalyses the reaction L-alanine(in) = L-alanine(out). The enzyme catalyses L-cysteine(in) = L-cysteine(out). Amino acid transporter importing serine, an essential substrate of the mitochondrial branch of the one-carbon pathway, into mitochondria. Mitochondrial serine is then converted to glycine and formate, which exits to the cytosol where it is used to generate the charged folates that serve as one-carbon donors. May also transport other amino acids including alanine and cysteine. The sequence is that of Sideroflexin-1 (Sfxn1) from Rattus norvegicus (Rat).